The following is a 376-amino-acid chain: Carbamoyl phosphate synthase small chain (376 aa).

Positions 1–187 (MKALLVLEDG…AEDGSYAWRG (187 aa)) are CPSase. L-glutamine is bound by residues Ser-45, Gly-239, and Gly-241. The 186-residue stretch at 191-376 (PLLVYDFGIK…RKIIGESAGA (186 aa)) folds into the Glutamine amidotransferase type-1 domain. Cys-266 functions as the Nucleophile in the catalytic mechanism. 5 residues coordinate L-glutamine: Leu-267, Gln-270, Asn-308, Gly-310, and Phe-311. Catalysis depends on residues His-349 and Glu-351.

Belongs to the CarA family. Composed of two chains; the small (or glutamine) chain promotes the hydrolysis of glutamine to ammonia, which is used by the large (or ammonia) chain to synthesize carbamoyl phosphate. Tetramer of heterodimers (alpha,beta)4.

The catalysed reaction is hydrogencarbonate + L-glutamine + 2 ATP + H2O = carbamoyl phosphate + L-glutamate + 2 ADP + phosphate + 2 H(+). It catalyses the reaction L-glutamine + H2O = L-glutamate + NH4(+). It functions in the pathway amino-acid biosynthesis; L-arginine biosynthesis; carbamoyl phosphate from bicarbonate: step 1/1. It participates in pyrimidine metabolism; UMP biosynthesis via de novo pathway; (S)-dihydroorotate from bicarbonate: step 1/3. Functionally, small subunit of the glutamine-dependent carbamoyl phosphate synthetase (CPSase). CPSase catalyzes the formation of carbamoyl phosphate from the ammonia moiety of glutamine, carbonate, and phosphate donated by ATP, constituting the first step of 2 biosynthetic pathways, one leading to arginine and/or urea and the other to pyrimidine nucleotides. The small subunit (glutamine amidotransferase) binds and cleaves glutamine to supply the large subunit with the substrate ammonia. In Desulfovibrio desulfuricans (strain ATCC 27774 / DSM 6949 / MB), this protein is Carbamoyl phosphate synthase small chain.